Here is a 175-residue protein sequence, read N- to C-terminus: Large ribosomal subunit protein uL18 (175 aa).

It belongs to the universal ribosomal protein uL18 family. In terms of assembly, part of the 50S ribosomal subunit. Contacts the 5S and 23S rRNAs.

In terms of biological role, this is one of the proteins that bind and probably mediate the attachment of the 5S RNA into the large ribosomal subunit, where it forms part of the central protuberance. In Methanosphaerula palustris (strain ATCC BAA-1556 / DSM 19958 / E1-9c), this protein is Large ribosomal subunit protein uL18.